A 345-amino-acid chain; its full sequence is Anthranilate phosphoribosyltransferase (345 aa).

Residues Gly84, 87-88, Thr92, 94-97, 112-120, and Ser124 each bind 5-phospho-alpha-D-ribose 1-diphosphate; these read GD, NVTT, and KHGNRSVSS. Gly84 lines the anthranilate pocket. Thr96 is a Mg(2+) binding site. Anthranilate is bound at residue Asn115. Residue Arg170 participates in anthranilate binding. 2 residues coordinate Mg(2+): Asp228 and Glu229.

This sequence belongs to the anthranilate phosphoribosyltransferase family. As to quaternary structure, homodimer. Mg(2+) serves as cofactor.

The enzyme catalyses N-(5-phospho-beta-D-ribosyl)anthranilate + diphosphate = 5-phospho-alpha-D-ribose 1-diphosphate + anthranilate. It participates in amino-acid biosynthesis; L-tryptophan biosynthesis; L-tryptophan from chorismate: step 2/5. Functionally, catalyzes the transfer of the phosphoribosyl group of 5-phosphorylribose-1-pyrophosphate (PRPP) to anthranilate to yield N-(5'-phosphoribosyl)-anthranilate (PRA). This is Anthranilate phosphoribosyltransferase from Corynebacterium aurimucosum (strain ATCC 700975 / DSM 44827 / CIP 107346 / CN-1) (Corynebacterium nigricans).